Reading from the N-terminus, the 301-residue chain is Cilia- and flagella-associated protein 161 (301 aa).

Residues 269 to 301 form a disordered region; that stretch reads GNPRDASSSMLDLPKPPTEDTRAMEQAMGLDTQ.

As to quaternary structure, microtubule inner protein component of sperm flagellar doublet microtubules. In terms of tissue distribution, expressed in airway epithelial cells.

It is found in the cytoplasm. The protein resides in the cytoskeleton. It localises to the cilium axoneme. Its subcellular location is the flagellum axoneme. Its function is as follows. Microtubule inner protein (MIP) part of the dynein-decorated doublet microtubules (DMTs) in cilia axoneme, which is required for motile cilia beating. This Homo sapiens (Human) protein is Cilia- and flagella-associated protein 161.